A 243-amino-acid polypeptide reads, in one-letter code: UPF0173 metal-dependent hydrolase Caur_2542 (243 aa).

Belongs to the UPF0173 family.

The protein is UPF0173 metal-dependent hydrolase Caur_2542 of Chloroflexus aurantiacus (strain ATCC 29366 / DSM 635 / J-10-fl).